The sequence spans 336 residues: NADH-quinone oxidoreductase subunit H (336 aa).

8 helical membrane passes run 9–29 (LVWI…LTYA), 77–97 (FLFA…VIPF), 116–136 (LGVM…IIAG), 156–176 (ISYE…TGSL), 188–208 (LPYW…VSIL), 236–256 (IPFA…SSIM), 275–295 (IVPG…CFLI), and 315–335 (VFLP…AFNI).

The protein belongs to the complex I subunit 1 family. NDH-1 is composed of 14 different subunits. Subunits NuoA, H, J, K, L, M, N constitute the membrane sector of the complex.

The protein localises to the cell inner membrane. It catalyses the reaction a quinone + NADH + 5 H(+)(in) = a quinol + NAD(+) + 4 H(+)(out). Functionally, NDH-1 shuttles electrons from NADH, via FMN and iron-sulfur (Fe-S) centers, to quinones in the respiratory chain. The immediate electron acceptor for the enzyme in this species is believed to be ubiquinone. Couples the redox reaction to proton translocation (for every two electrons transferred, four hydrogen ions are translocated across the cytoplasmic membrane), and thus conserves the redox energy in a proton gradient. This subunit may bind ubiquinone. This Neorickettsia sennetsu (strain ATCC VR-367 / Miyayama) (Ehrlichia sennetsu) protein is NADH-quinone oxidoreductase subunit H.